We begin with the raw amino-acid sequence, 223 residues long: MKFAVLVFPGSNCDRDMYNAAIKSGVDAAYVDYRETTLDGFDGVLIPGGFSFGDYLRSGAMASVAPIIKEVKRFAKEGKPVLGVCNGFQILTEIGLLPGALLHNDSHLFISRNETLKITNNQTPFTHLYVKNENVVYPVAHGEGHYYCTDEIYRELNDNNQIILKYTNNPNGSYEDIAGIVNKEGNVCGMMPHPERALETLLGTNSGVKLFESMVKSWREQNV.

The 221-residue stretch at 3–223 (FAVLVFPGSN…MVKSWREQNV (221 aa)) folds into the Glutamine amidotransferase type-1 domain. Cys-85 functions as the Nucleophile in the catalytic mechanism. Residues His-193 and Glu-195 contribute to the active site.

As to quaternary structure, part of the FGAM synthase complex composed of 1 PurL, 1 PurQ and 2 PurS subunits.

The protein localises to the cytoplasm. The enzyme catalyses N(2)-formyl-N(1)-(5-phospho-beta-D-ribosyl)glycinamide + L-glutamine + ATP + H2O = 2-formamido-N(1)-(5-O-phospho-beta-D-ribosyl)acetamidine + L-glutamate + ADP + phosphate + H(+). It carries out the reaction L-glutamine + H2O = L-glutamate + NH4(+). Its pathway is purine metabolism; IMP biosynthesis via de novo pathway; 5-amino-1-(5-phospho-D-ribosyl)imidazole from N(2)-formyl-N(1)-(5-phospho-D-ribosyl)glycinamide: step 1/2. Functionally, part of the phosphoribosylformylglycinamidine synthase complex involved in the purines biosynthetic pathway. Catalyzes the ATP-dependent conversion of formylglycinamide ribonucleotide (FGAR) and glutamine to yield formylglycinamidine ribonucleotide (FGAM) and glutamate. The FGAM synthase complex is composed of three subunits. PurQ produces an ammonia molecule by converting glutamine to glutamate. PurL transfers the ammonia molecule to FGAR to form FGAM in an ATP-dependent manner. PurS interacts with PurQ and PurL and is thought to assist in the transfer of the ammonia molecule from PurQ to PurL. The protein is Phosphoribosylformylglycinamidine synthase subunit PurQ of Staphylococcus epidermidis (strain ATCC 35984 / DSM 28319 / BCRC 17069 / CCUG 31568 / BM 3577 / RP62A).